A 502-amino-acid polypeptide reads, in one-letter code: ATP synthase subunit alpha (502 aa).

ATP is bound at residue 169–176; sequence GDRQTGKT.

It belongs to the ATPase alpha/beta chains family. As to quaternary structure, F-type ATPases have 2 components, CF(1) - the catalytic core - and CF(0) - the membrane proton channel. CF(1) has five subunits: alpha(3), beta(3), gamma(1), delta(1), epsilon(1). CF(0) has three main subunits: a(1), b(2) and c(9-12). The alpha and beta chains form an alternating ring which encloses part of the gamma chain. CF(1) is attached to CF(0) by a central stalk formed by the gamma and epsilon chains, while a peripheral stalk is formed by the delta and b chains.

The protein localises to the cell inner membrane. It carries out the reaction ATP + H2O + 4 H(+)(in) = ADP + phosphate + 5 H(+)(out). Its function is as follows. Produces ATP from ADP in the presence of a proton gradient across the membrane. The alpha chain is a regulatory subunit. In Thermodesulfovibrio yellowstonii (strain ATCC 51303 / DSM 11347 / YP87), this protein is ATP synthase subunit alpha.